A 173-amino-acid chain; its full sequence is Large ribosomal subunit protein uL10 (173 aa).

It belongs to the universal ribosomal protein uL10 family. In terms of assembly, part of the ribosomal stalk of the 50S ribosomal subunit. The N-terminus interacts with L11 and the large rRNA to form the base of the stalk. The C-terminus forms an elongated spine to which L12 dimers bind in a sequential fashion forming a multimeric L10(L12)X complex.

Functionally, forms part of the ribosomal stalk, playing a central role in the interaction of the ribosome with GTP-bound translation factors. The chain is Large ribosomal subunit protein uL10 from Chlorobium phaeobacteroides (strain BS1).